A 1346-amino-acid polypeptide reads, in one-letter code: Pikromycin polyketide synthase component PikAIV (1346 aa).

Residues 3–32 (SSNEQLVDALRASLKENEELRKESRRRADR) are a coiled coil. A Ketosynthase family 3 (KS3) domain is found at 34–461 (QEPMAIVGMS…GTNAHVVLEE (428 aa)). The module 6 stretch occupies residues 37–1332 (MAIVGMSCRF…HAPAVAEAVL (1296 aa)). Active-site for beta-ketoacyl synthase activity residues include cysteine 207, histidine 342, and histidine 382. The acyltransferase stretch occupies residues 562–844 (FVFPGQGTQW…VLTMTLPDKV (283 aa)). The Acyl-ester intermediate; for acyltransferase activity role is filled by serine 652. Residues 945 to 1020 (SAVLAMVMRQ…ALAERISDEL (76 aa)) form the Carrier domain. Residue serine 980 is modified to O-(pantetheine 4'-phosphoryl)serine. Residues 1028–1050 (AEPSDHEQAEEEKAAAPAGARSG) are disordered. Positions 1030-1041 (PSDHEQAEEEKA) are enriched in basic and acidic residues. Threonine 1125 lines the substrate pocket. The segment at 1127 to 1332 (ANGGPHEFLR…HAPAVAEAVL (206 aa)) is thioesterase. Catalysis depends on serine 1196, which acts as the Nucleophile; for thioesterase activity. Residues glycine 1197 and aspartate 1224 each coordinate substrate. Histidine 1316 serves as the catalytic Proton acceptor; for thioesterase activity.

In terms of assembly, homodimer. Pikromycin PKS consists of a combination of multimodular (PikAI and PikAII) and monomodular (PikAIII and PikAIV) polypeptides each coding for a functional synthase subunit which participates in 1 (monomodular) or 2 (multimodular) of the six FAS-like elongation steps required for formation of the polyketide. Module 1, 2, 3, 4, 5, and 6 participating in biosynthesis steps 1, 2, 3, 4, 5, and 6, respectively. Pantetheine 4'-phosphate serves as cofactor.

It carries out the reaction 5 (S)-methylmalonyl-CoA + malonyl-CoA + 5 NADPH + 11 H(+) = 10-deoxymethynolide + 6 CO2 + 5 NADP(+) + 6 CoA + 2 H2O. It catalyses the reaction 6 (S)-methylmalonyl-CoA + malonyl-CoA + 5 NADPH + 12 H(+) = narbonolide + 7 CO2 + 5 NADP(+) + 7 CoA + 2 H2O. The protein operates within antibiotic biosynthesis. Its activity is regulated as follows. Irreversibly inhibited by (2S,3R,4S)-2,4-dihydroxy-3-methylhexyl-phosphonic acid and (3R,4S)-4-hydroxy-3-methyl-2-oxohexyl-phosphonic acid. In terms of biological role, involved in the biosynthesis of 12- and 14-membered ring macrolactone antibiotics such as methymycin and neomethymycin, and pikromycin and narbomycin, respectively. Component of the pikromycin PKS which catalyzes the biosynthesis of both precursors 10-deoxymethynolide (12-membered ring macrolactone) and narbonolide (14-membered ring macrolactone). Chain elongation through PikAI, PikAII and PikAIII followed by thioesterase catalyzed termination results in the production of 10-deoxymethynolide, while continued elongation through PikAIV, followed by thioesterase (TE) catalyzed cyclization results in the biosynthesis of the narbonolide. The thioesterase can use a series of diketide-N-acetylcysteamine (SNAC) thioesters, but has a strong preference for the 2-methyl-3-ketopentanoyl-SNAC over the stereoisomers of 2-methyl-3-hydroxyacyl-SNAC. The sequence is that of Pikromycin polyketide synthase component PikAIV from Streptomyces venezuelae.